A 416-amino-acid chain; its full sequence is Catalase-peroxidase 2 (416 aa).

Residues 1-20 (MLLPLIVFLLSVLIHHRIYS) form the signal peptide.

The protein belongs to the peroxidase family. Peroxidase/catalase subfamily. Homodimer or homotetramer. The cofactor is heme b. In terms of processing, formation of the three residue Trp-Tyr-Met cross-link is important for the catalase, but not the peroxidase activity of the enzyme.

It catalyses the reaction H2O2 + AH2 = A + 2 H2O. It carries out the reaction 2 H2O2 = O2 + 2 H2O. Bifunctional enzyme with both catalase and broad-spectrum peroxidase activity. In Alkaliphilus metalliredigens (strain QYMF), this protein is Catalase-peroxidase 2 (katG2).